The primary structure comprises 428 residues: Tyrosine--tRNA ligase (428 aa).

Tyrosine 41 is an L-tyrosine binding site. A 'HIGH' region motif is present at residues 46–55 (PTADSLHLGH). The residue at position 148 (lysine 148) is an N6-acetyllysine. Positions 179 and 183 each coordinate L-tyrosine. Residues 239-243 (KFGKT) carry the 'KMSKS' region motif. Lysine 242 provides a ligand contact to ATP. The region spanning 361–418 (ADLMQALVDSELQPSRGQARKTIASNAITINGEKQSDPEYFFKEEDRLFGRFTLLRRG) is the S4 RNA-binding domain.

The protein belongs to the class-I aminoacyl-tRNA synthetase family. TyrS type 1 subfamily. In terms of assembly, homodimer.

It is found in the cytoplasm. The enzyme catalyses tRNA(Tyr) + L-tyrosine + ATP = L-tyrosyl-tRNA(Tyr) + AMP + diphosphate + H(+). Its function is as follows. Catalyzes the attachment of tyrosine to tRNA(Tyr) in a two-step reaction: tyrosine is first activated by ATP to form Tyr-AMP and then transferred to the acceptor end of tRNA(Tyr). This chain is Tyrosine--tRNA ligase, found in Escherichia coli O1:K1 / APEC.